Here is a 379-residue protein sequence, read N- to C-terminus: Alcohol dehydrogenase 2 (379 aa).

The Zn(2+) site is built by Cys-47, Thr-49, His-69, Cys-99, Cys-102, Cys-105, Cys-113, and Cys-177. 2 residues coordinate an alcohol: Thr-49 and His-69. Thr-49 lines the NAD(+) pocket. NAD(+) is bound by residues 202–207 (GLGAVG), Asp-226, Lys-231, Thr-272, Val-295, 295–297 (VGV), Phe-322, and Arg-372.

It belongs to the zinc-containing alcohol dehydrogenase family. As to quaternary structure, homodimer. Zn(2+) is required as a cofactor.

It is found in the cytoplasm. It catalyses the reaction a primary alcohol + NAD(+) = an aldehyde + NADH + H(+). It carries out the reaction a secondary alcohol + NAD(+) = a ketone + NADH + H(+). The chain is Alcohol dehydrogenase 2 (ADH2) from Oryza sativa subsp. indica (Rice).